Here is a 406-residue protein sequence, read N- to C-terminus: MAAAVRQDLAQLMNSSGSHKDLAGKYRQILEKAIQLSGTEQLEALKAFVEAMVNENVSLVISRQLLTDFCTHLPNLPDSTAKEVYHFTLEKVQPRVISFEEQVASIRQRLASIYEKEEDWRNAAQVLVGIPLETGQKQYNVDYKLETYLKIARLYLEDDDPVQAEAYINRASLLQNESTNEQLQIHYKVCYARVLDYRRKFIEAAQRYNELSYKTIVHESERLEALKHALHCTILASAGQQRSRMLATLFKDERCQQLAAYGILEKMYLDRIIRGNQLQEFAAMLMPHQKATTADGSSILDRAVIEHNLLSASKLYNNITFEELGALLEIPAAKAEKIASQMITEGRMNGFIDQIDGIVHFETREALPTWDKQIQSLCFQVNNLLEKISQTAPEWTAQAMEAQMAQ.

N-acetylalanine is present on A2. K25 is subject to N6-acetyllysine. Positions Y197–A366 constitute a PCI domain.

It belongs to the CSN4 family. Component of the CSN complex, composed of COPS1/GPS1, COPS2, COPS3, COPS4, COPS5, COPS6, COPS7 (COPS7A or COPS7B), COPS8 and COPS9. In the complex, it probably interacts directly with COPS1, COPS2, COPS3, COPS5, COPS6, COPS7 (COPS7A or COPS7B) and COPS8. Interacts with TOR1A; the interaction is direct and associates TOR1A and SNAPIN with the CSN complex. Interacts with STON2; controls STON2 neddylation levels. Interacts with ERCC6.

It localises to the cytoplasm. It is found in the nucleus. The protein resides in the cytoplasmic vesicle. Its subcellular location is the secretory vesicle. The protein localises to the synaptic vesicle. In terms of biological role, component of the COP9 signalosome complex (CSN), a complex involved in various cellular and developmental processes. The CSN complex is an essential regulator of the ubiquitin (Ubl) conjugation pathway by mediating the deneddylation of the cullin subunits of SCF-type E3 ligase complexes, leading to decrease the Ubl ligase activity of SCF-type complexes such as SCF, CSA or DDB2. Also involved in the deneddylation of non-cullin subunits such as STON2. The complex is also involved in phosphorylation of p53/TP53, c-jun/JUN, IkappaBalpha/NFKBIA, ITPK1, IRF8/ICSBP and SNAPIN, possibly via its association with CK2 and PKD kinases. CSN-dependent phosphorylation of TP53 and JUN promotes and protects degradation by the Ubl system, respectively. The chain is COP9 signalosome complex subunit 4 (Cops4) from Rattus norvegicus (Rat).